The following is a 425-amino-acid chain: Enolase (425 aa).

(2R)-2-phosphoglycerate is bound at residue glutamine 162. The active-site Proton donor is glutamate 204. Mg(2+) is bound by residues aspartate 241, glutamate 284, and aspartate 311. 4 residues coordinate (2R)-2-phosphoglycerate: lysine 336, arginine 365, serine 366, and lysine 387. The active-site Proton acceptor is lysine 336.

This sequence belongs to the enolase family. Mg(2+) is required as a cofactor.

Its subcellular location is the cytoplasm. It localises to the secreted. It is found in the cell surface. The enzyme catalyses (2R)-2-phosphoglycerate = phosphoenolpyruvate + H2O. It participates in carbohydrate degradation; glycolysis; pyruvate from D-glyceraldehyde 3-phosphate: step 4/5. Catalyzes the reversible conversion of 2-phosphoglycerate (2-PG) into phosphoenolpyruvate (PEP). It is essential for the degradation of carbohydrates via glycolysis. This is Enolase from Brucella ovis (strain ATCC 25840 / 63/290 / NCTC 10512).